A 122-amino-acid polypeptide reads, in one-letter code: Ribosome-binding factor A (122 aa).

The protein belongs to the RbfA family. As to quaternary structure, monomer. Binds 30S ribosomal subunits, but not 50S ribosomal subunits or 70S ribosomes.

The protein localises to the cytoplasm. In terms of biological role, one of several proteins that assist in the late maturation steps of the functional core of the 30S ribosomal subunit. Associates with free 30S ribosomal subunits (but not with 30S subunits that are part of 70S ribosomes or polysomes). Required for efficient processing of 16S rRNA. May interact with the 5'-terminal helix region of 16S rRNA. This is Ribosome-binding factor A from Burkholderia mallei (strain NCTC 10229).